Here is a 101-residue protein sequence, read N- to C-terminus: Large ribosomal subunit protein uL24 (101 aa).

This sequence belongs to the universal ribosomal protein uL24 family. Part of the 50S ribosomal subunit.

Its function is as follows. One of two assembly initiator proteins, it binds directly to the 5'-end of the 23S rRNA, where it nucleates assembly of the 50S subunit. One of the proteins that surrounds the polypeptide exit tunnel on the outside of the subunit. This chain is Large ribosomal subunit protein uL24, found in Thermobifida fusca (strain YX).